The sequence spans 557 residues: NADP-dependent malic enzyme (557 aa).

The Proton donor role is filled by tyrosine 91. Arginine 144 provides a ligand contact to NADP(+). Catalysis depends on lysine 162, which acts as the Proton acceptor. Residues glutamate 234, aspartate 235, and aspartate 258 each coordinate a divalent metal cation. Residues aspartate 258, 290–307 (GAGE…MAME), and asparagine 397 contribute to the NADP(+) site.

This sequence belongs to the malic enzymes family. As to quaternary structure, homotetramer. Requires Mg(2+) as cofactor. It depends on Mn(2+) as a cofactor.

It is found in the cytoplasm. The enzyme catalyses (S)-malate + NADP(+) = pyruvate + CO2 + NADPH. The catalysed reaction is oxaloacetate + H(+) = pyruvate + CO2. This is NADP-dependent malic enzyme (ME1) from Anas platyrhynchos (Mallard).